The chain runs to 841 residues: DNA ligase (841 aa).

NAD(+) is bound by residues D33–D37, S82–L83, and E114. Catalysis depends on K116, which acts as the N6-AMP-lysine intermediate. Residues R137, E174, K300, and K324 each coordinate NAD(+). 4 residues coordinate Zn(2+): C418, C421, C436, and C442. The 84-residue stretch at E758–R841 folds into the BRCT domain.

Belongs to the NAD-dependent DNA ligase family. LigA subfamily. Mg(2+) serves as cofactor. Requires Mn(2+) as cofactor.

It catalyses the reaction NAD(+) + (deoxyribonucleotide)n-3'-hydroxyl + 5'-phospho-(deoxyribonucleotide)m = (deoxyribonucleotide)n+m + AMP + beta-nicotinamide D-nucleotide.. DNA ligase that catalyzes the formation of phosphodiester linkages between 5'-phosphoryl and 3'-hydroxyl groups in double-stranded DNA using NAD as a coenzyme and as the energy source for the reaction. It is essential for DNA replication and repair of damaged DNA. In Xanthomonas oryzae pv. oryzae (strain KACC10331 / KXO85), this protein is DNA ligase.